The chain runs to 766 residues: Tetratricopeptide repeat protein 14 (766 aa).

The tract at residues 35–55 (LGTAAEPARGAAPPPGAGRKE) is disordered. Residues 125–207 (GDIVIGRISS…YHEKLAVSLY (83 aa)) form the S1 motif domain. TPR repeat units lie at residues 209-242 (SSLP…NSNS), 306-339 (ALKC…DKQN), 341-373 (EALV…CPTH), and 381-414 (CQTL…DETF). Residues 463–743 (EEKRLKKKRR…PDSRVKKNLP (281 aa)) are disordered. Positions 475 to 496 (SSSSSVSSADESVSSSSSSSSS) are enriched in low complexity. Positions 497-506 (SHKRHKKSKR) are enriched in basic residues. Over residues 539–550 (PTNTSASFLNQK) the composition is skewed to polar residues. Residues 551-562 (QEVEKLLEKQDR) are compositionally biased toward basic and acidic residues. The span at 594-605 (FYNSYKTQAGSS) shows a compositional bias: polar residues. Basic and acidic residues-rich tracts occupy residues 606–616 (KTEKPYKSERH) and 629–657 (NSED…RRWE). Over residues 661 to 673 (VKYSTSPASSDYS) the composition is skewed to polar residues. Phosphoserine is present on S666. Residues 707 to 738 (RVYEKEDSCGEGNRNEAPEEMLNSKEQPDSRV) are compositionally biased toward basic and acidic residues.

It belongs to the TTC14 family.

The polypeptide is Tetratricopeptide repeat protein 14 (Mus musculus (Mouse)).